The primary structure comprises 470 residues: Glutamate--tRNA ligase 2 (470 aa).

The short motif at 11 to 21 is the 'HIGH' region element; the sequence is PSPTGHLHLGG. The 'KMSKS' region motif lies at 238-242; sequence KLSKR. Lys-241 provides a ligand contact to ATP.

This sequence belongs to the class-I aminoacyl-tRNA synthetase family. Glutamate--tRNA ligase type 1 subfamily. In terms of assembly, monomer.

Its subcellular location is the cytoplasm. The enzyme catalyses tRNA(Glu) + L-glutamate + ATP = L-glutamyl-tRNA(Glu) + AMP + diphosphate. Catalyzes the attachment of glutamate to tRNA(Glu) in a two-step reaction: glutamate is first activated by ATP to form Glu-AMP and then transferred to the acceptor end of tRNA(Glu). This is Glutamate--tRNA ligase 2 from Ehrlichia ruminantium (strain Welgevonden).